A 501-amino-acid polypeptide reads, in one-letter code: E3 ubiquitin-protein ligase TRIM35 (501 aa).

At methionine 1 the chain carries N-acetylmethionine. The residue at position 8 (serine 8) is a Phosphoserine. The RING-type zinc finger occupies 21–61 (CAVCYDPFRDAVTLRCGHNFCRRCVSGCWEVQTTPSCPVCK). The B box-type zinc-finger motif lies at 96-137 (RSPRPCRAHRAPLTLFCVEDKELLCCACQADARHQEHRVQPI). 4 residues coordinate Zn(2+): cysteine 101, histidine 104, cysteine 123, and histidine 129. Residues 209-252 (MKEESRKKHLLAEEKMKQLAEQTEALAREIERLQMEMKEDDMTF) adopt a coiled-coil conformation. The region spanning 284–495 (LESLQYRVWK…LRICHLRVSI (212 aa)) is the B30.2/SPRY domain.

As to quaternary structure, interacts with PKM isoform M2, but not isoform M1; this interaction may compete with that between PKM and FGFR1, and hence reduces FGFR1-dependent tyrosine phosphorylation of PKM. Interacts with IRF7; this interaction promotes IRF7 proteasomal degradation. Interacts with TRAF3; this interaction promotes TRAF3 activation.

The protein localises to the cytoplasm. The protein resides in the nucleus. It catalyses the reaction S-ubiquitinyl-[E2 ubiquitin-conjugating enzyme]-L-cysteine + [acceptor protein]-L-lysine = [E2 ubiquitin-conjugating enzyme]-L-cysteine + N(6)-ubiquitinyl-[acceptor protein]-L-lysine.. The protein operates within protein modification; protein ubiquitination. In terms of biological role, E3 ubiquitin-protein ligase that participates in multiple biological processes including cell death, glucose metabolism, and in particular, the innate immune response. Mediates 'Lys-63'-linked polyubiquitination of TRAF3 thereby promoting type I interferon production via RIG-I signaling pathway. Can also catalyze 'Lys-48'-linked polyubiquitination and proteasomal degradation of viral proteins such as influenza virus PB2. Acts as a negative feedback regulator of TLR7- and TLR9-triggered signaling. Mechanistically, promotes the 'Lys-48'-linked ubiquitination of IRF7 and induces its degradation via a proteasome-dependent pathway. Reduces FGFR1-dependent tyrosine phosphorylation of PKM, inhibiting PKM-dependent lactate production, glucose metabolism, and cell growth. The polypeptide is E3 ubiquitin-protein ligase TRIM35 (Trim35) (Rattus norvegicus (Rat)).